A 463-amino-acid chain; its full sequence is Asparagine--tRNA ligase (463 aa).

The protein belongs to the class-II aminoacyl-tRNA synthetase family. As to quaternary structure, homodimer.

It is found in the cytoplasm. It carries out the reaction tRNA(Asn) + L-asparagine + ATP = L-asparaginyl-tRNA(Asn) + AMP + diphosphate + H(+). This Clostridium botulinum (strain Langeland / NCTC 10281 / Type F) protein is Asparagine--tRNA ligase.